Reading from the N-terminus, the 377-residue chain is Lipoyl synthase, mitochondrial (377 aa).

7 residues coordinate [4Fe-4S] cluster: cysteine 103, cysteine 108, cysteine 114, cysteine 134, cysteine 138, cysteine 141, and serine 349. Residues 119-338 (EHGTQTATIM…EERGNELGFL (220 aa)) form the Radical SAM core domain.

The protein belongs to the radical SAM superfamily. Lipoyl synthase family. [4Fe-4S] cluster serves as cofactor.

It is found in the mitochondrion. The catalysed reaction is [[Fe-S] cluster scaffold protein carrying a second [4Fe-4S](2+) cluster] + N(6)-octanoyl-L-lysyl-[protein] + 2 oxidized [2Fe-2S]-[ferredoxin] + 2 S-adenosyl-L-methionine + 4 H(+) = [[Fe-S] cluster scaffold protein] + N(6)-[(R)-dihydrolipoyl]-L-lysyl-[protein] + 4 Fe(3+) + 2 hydrogen sulfide + 2 5'-deoxyadenosine + 2 L-methionine + 2 reduced [2Fe-2S]-[ferredoxin]. The protein operates within protein modification; protein lipoylation via endogenous pathway; protein N(6)-(lipoyl)lysine from octanoyl-[acyl-carrier-protein]: step 2/2. Catalyzes the radical-mediated insertion of two sulfur atoms into the C-6 and C-8 positions of the octanoyl moiety bound to the lipoyl domains of lipoate-dependent enzymes, thereby converting the octanoylated domains into lipoylated derivatives. The polypeptide is Lipoyl synthase, mitochondrial (Drosophila sechellia (Fruit fly)).